A 448-amino-acid polypeptide reads, in one-letter code: DEAD-box ATP-dependent RNA helicase CshB (448 aa).

Residues 4 to 32 carry the Q motif motif; that stretch reads HPFEQFNLESSLIDAVKDLNFEKPTEIQN. Residues 35-206 enclose the Helicase ATP-binding domain; it reads IPRILKRTNL…NKYLSHPEYV (172 aa). Position 48 to 55 (48 to 55) interacts with ATP; sequence SQTGTGKS. Positions 154–157 match the DEAD box motif; it reads DEAD. Residues 236 to 386 form the Helicase C-terminal domain; sequence NLIDILNPYL…EVKAHNQRQA (151 aa). Residues 400 to 418 are compositionally biased toward basic residues; that stretch reads NKVRSKIKNKVKPGYKKKF. Residues 400 to 448 are disordered; it reads NKVRSKIKNKVKPGYKKKFKQEVEKMKRQERKQFSKQQNRQKRKQNKKG. The segment covering 419-432 has biased composition (basic and acidic residues); the sequence is KQEVEKMKRQERKQ. A compositionally biased stretch (basic residues) spans 438 to 448; that stretch reads NRQKRKQNKKG.

This sequence belongs to the DEAD box helicase family. CshB subfamily.

The protein localises to the cytoplasm. It catalyses the reaction ATP + H2O = ADP + phosphate + H(+). Functionally, probable DEAD-box RNA helicase. May work in conjunction with the cold shock proteins to ensure proper initiation of transcription at low and optimal temperatures. The chain is DEAD-box ATP-dependent RNA helicase CshB from Staphylococcus aureus (strain NCTC 8325 / PS 47).